Consider the following 349-residue polypeptide: Phosphate acyltransferase (349 aa).

The protein belongs to the PlsX family. In terms of assembly, homodimer. Probably interacts with PlsY.

Its subcellular location is the cytoplasm. It catalyses the reaction a fatty acyl-[ACP] + phosphate = an acyl phosphate + holo-[ACP]. It functions in the pathway lipid metabolism; phospholipid metabolism. Catalyzes the reversible formation of acyl-phosphate (acyl-PO(4)) from acyl-[acyl-carrier-protein] (acyl-ACP). This enzyme utilizes acyl-ACP as fatty acyl donor, but not acyl-CoA. This Rhodopseudomonas palustris (strain BisA53) protein is Phosphate acyltransferase.